The chain runs to 347 residues: MKPPILITIMLTVVSGTMIVLTSSHWLTVWIGFEMNMLAIIPILMKKSNPRAIEASTKYLLTQATASMILMMGVAIDLLYSGQWTMSKTLCPMASAMMTIALAMKLGLAPFHFWVPEVTQGIHMSSGLILLTWQKIAPLSILYQISPTINPNLLLPMAIASVLIGGWGGLNQTQLRKILAYSSIAHMGWMAAITLYNPTMMILNLTIYIIMTSTTFMLFMYNSSTTTLSLSQTWNKAPLITSLILMLMLSLGGLPPLSGFIPKWMIIQELTKNEMIIVPTLLAMTALLNLYFYMRLTYTTTLTMFPSTNNMMMKWKFNNTKKMTLLSPLIVVSTMLLPITPLLSILD.

11 helical membrane passes run 3–23, 25–45, 59–79, 96–116, 122–142, 149–169, 178–198, 200–220, 237–257, 274–294, and 325–345; these read PPIL…VLTS, HWLT…PILM, YLLT…IDLL, AMMT…FWVP, IHMS…LSIL, INPN…GWGG, ILAY…LYNP, MMIL…MLFM, APLI…LPPL, EMII…YFYM, and LLSP…LLSI.

The protein belongs to the complex I subunit 2 family. Core subunit of respiratory chain NADH dehydrogenase (Complex I) which is composed of 45 different subunits. Interacts with TMEM242.

The protein resides in the mitochondrion inner membrane. It carries out the reaction a ubiquinone + NADH + 5 H(+)(in) = a ubiquinol + NAD(+) + 4 H(+)(out). Functionally, core subunit of the mitochondrial membrane respiratory chain NADH dehydrogenase (Complex I) which catalyzes electron transfer from NADH through the respiratory chain, using ubiquinone as an electron acceptor. Essential for the catalytic activity and assembly of complex I. This Cynictis penicillata (Yellow mongoose) protein is NADH-ubiquinone oxidoreductase chain 2.